Here is a 44-residue protein sequence, read N- to C-terminus: uncharacterized protein (44 aa).

The first 28 residues, 1–28, serve as a signal peptide directing secretion; it reads MLRDLGRRVAIAAILSGIILGGMSISLA.

This is an uncharacterized protein from Bacillus subtilis (strain 168).